The primary structure comprises 114 residues: MAEEKHQHHHHLFHHKNKEDEGGPVDYEKEVKHHSHLEKIGELGAVAAGALALHEKHKAKKDPEHAHKHKIEEEIMAVAAVGAGGFAFHEHHQKKDAKKEKKEVEGGHHHHHHY.

Disordered stretches follow at residues 1–25 and 88–114; these read MAEE…GGPV and FHEH…HHHY. Basic residues predominate over residues 7–16; it reads QHHHHLFHHK. Positions 97-107 are enriched in basic and acidic residues; it reads AKKEKKEVEGG.

The protein belongs to the abscisic acid and water stress-induced protein family.

This is Abscisic stress-ripening protein 2 from Solanum lycopersicum (Tomato).